The chain runs to 346 residues: Senescence-specific cysteine protease SAG12 (346 aa).

A signal peptide spans methionine 1–serine 25. Residue asparagine 124 is glycosylated (N-linked (GlcNAc...) asparagine). 3 cysteine pairs are disulfide-bonded: cysteine 151/cysteine 192, cysteine 185/cysteine 225, and cysteine 283/cysteine 335. The active site involves cysteine 154. Residue histidine 289 is part of the active site. Asparagine 301 carries N-linked (GlcNAc...) asparagine glycosylation. The active site involves asparagine 310.

Belongs to the peptidase C1 family. In terms of tissue distribution, found in senescent leaves, especially in senescence-associated vacuoles- (SAVs) containing cells (e.g. mesophyll and guard cells), and in senescencing ovules of unfertilised pistils.

Its subcellular location is the vacuole. In terms of biological role, cysteine protease that may have a developmental senescence specific cell death function during apoptosis, heavy metal detoxification, and hypersensitive response. The protein is Senescence-specific cysteine protease SAG12 of Arabidopsis thaliana (Mouse-ear cress).